Consider the following 282-residue polypeptide: Dihydropteroate synthase (282 aa).

A Pterin-binding domain is found at 15-267 (PHVMGILNVT…DVKETVEAMR (253 aa)). Asn22 provides a ligand contact to Mg(2+). (7,8-dihydropterin-6-yl)methyl diphosphate is bound by residues Thr62, Asp96, Asn115, Asp185, Lys221, and 255–257 (RVH).

It belongs to the DHPS family. In terms of assembly, homodimer. The cofactor is Mg(2+).

The catalysed reaction is (7,8-dihydropterin-6-yl)methyl diphosphate + 4-aminobenzoate = 7,8-dihydropteroate + diphosphate. It participates in cofactor biosynthesis; tetrahydrofolate biosynthesis; 7,8-dihydrofolate from 2-amino-4-hydroxy-6-hydroxymethyl-7,8-dihydropteridine diphosphate and 4-aminobenzoate: step 1/2. Its function is as follows. Catalyzes the condensation of para-aminobenzoate (pABA) with 6-hydroxymethyl-7,8-dihydropterin diphosphate (DHPt-PP) to form 7,8-dihydropteroate (H2Pte), the immediate precursor of folate derivatives. This chain is Dihydropteroate synthase (folP), found in Shigella flexneri.